Consider the following 448-residue polypeptide: Late embryogenesis abundant protein ECP63 (448 aa).

Composition is skewed to basic and acidic residues over residues 282–326 (TEEA…EEAG) and 334–354 (QKTRESTESGAQKAEETKDSA). Disordered stretches follow at residues 282–360 (TEEA…RGNE) and 411–448 (SKPGKVATSLKASDQMTGQTFNDVGRMDDDARKDKGKL). Residues 297 to 331 (KENMEKAGEVTRQKMEEMRLEGKELKEEAGAKAQE) adopt a coiled-coil conformation. The span at 420-432 (LKASDQMTGQTFN) shows a compositional bias: polar residues. A compositionally biased stretch (basic and acidic residues) spans 435-448 (GRMDDDARKDKGKL).

Belongs to the LEA type 4 family. Expressed in mature seeds.

Functionally, may be involved in the BHLH109-mediated regulation of somatic embryogenesis. The sequence is that of Late embryogenesis abundant protein ECP63 from Arabidopsis thaliana (Mouse-ear cress).